A 273-amino-acid chain; its full sequence is Glutamate racemase (273 aa).

Residues 9–10 (DS) and 41–42 (YG) each bind substrate. The Proton donor/acceptor role is filled by Cys-73. 74–75 (NT) serves as a coordination point for substrate. Cys-183 serves as the catalytic Proton donor/acceptor. 184 to 185 (TH) provides a ligand contact to substrate.

This sequence belongs to the aspartate/glutamate racemases family.

It catalyses the reaction L-glutamate = D-glutamate. Its pathway is cell wall biogenesis; peptidoglycan biosynthesis. Functionally, provides the (R)-glutamate required for cell wall biosynthesis. The sequence is that of Glutamate racemase from Shewanella oneidensis (strain ATCC 700550 / JCM 31522 / CIP 106686 / LMG 19005 / NCIMB 14063 / MR-1).